We begin with the raw amino-acid sequence, 465 residues long: Calcitonin gene-related peptide type 1 receptor (465 aa).

The first 17 residues, 1–17, serve as a signal peptide directing secretion; the sequence is MVICLLLCTPTDIFVVA. The Extracellular segment spans residues 18 to 141; it reads SPEVNETQEY…HTNEGRMTAM (124 aa). N-linked (GlcNAc...) asparagine glycans are attached at residues Asn22, Asn68, Asn120, and Asn125. 3 cysteine pairs are disulfide-bonded: Cys50–Cys76, Cys67–Cys107, and Cys90–Cys129. Residues 142–166 traverse the membrane as a helical segment; it reads NLFYLALIGHGLSLTSLLISLGIFF. Topologically, residues 167 to 177 are cytoplasmic; that stretch reads YFKSLSCQRIT. Residues 178-200 form a helical membrane-spanning segment; that stretch reads LHKNLFFSFVLNSVITIIWLTAV. Residues 201–211 are Extracellular-facing; the sequence is ANNQELVQRNP. A helical membrane pass occupies residues 212–240; sequence TSCKVSQFIHLYLFGCNYFWMLCEGIYLH. Over 241–254 the chain is Cytoplasmic; sequence TLIVVAVFAEKQHL. The chain crosses the membrane as a helical span at residues 255 to 275; the sequence is MWYYLLGWGFPLIPASIHAIA. Residues 276 to 291 lie on the Extracellular side of the membrane; it reads RSYYYNDNCWISSNTS. The N-linked (GlcNAc...) asparagine glycan is linked to Asn289. A helical transmembrane segment spans residues 292 to 316; the sequence is LLYIIHGPICAALLVNLFFLLNIVR. Topologically, residues 317 to 331 are cytoplasmic; sequence VLITKLKVTHQAESS. A helical transmembrane segment spans residues 332-353; sequence LYMKAVRATLILVPLLGIQYVL. Topologically, residues 354–368 are extracellular; sequence LPYKPEGRVSSEIYD. The helical transmembrane segment at 369 to 389 threads the bilayer; that stretch reads YIMHILMHYQGLLVATIFCFF. The Cytoplasmic portion of the chain corresponds to 390–465; that stretch reads NGEVQGVLRR…SILKSENPFT (76 aa).

This sequence belongs to the G-protein coupled receptor 2 family.

It localises to the cell membrane. Functionally, may function as G protein-coupled receptor for calcitonin-gene-related peptides and adrenomedullin. Specificity may be modulated by accessory proteins. May activate cAMP-dependent pathway. This Oncorhynchus gorbuscha (Pink salmon) protein is Calcitonin gene-related peptide type 1 receptor (calcrl).